Here is a 349-residue protein sequence, read N- to C-terminus: sn-glycerol-3-phosphate import ATP-binding protein UgpC (349 aa).

The region spanning 4-235 (VTLTAVRKVY…PASTFVASFM (232 aa)) is the ABC transporter domain. Position 37-44 (37-44 (GPSGCGKS)) interacts with ATP.

It belongs to the ABC transporter superfamily. sn-glycerol-3-phosphate importer (TC 3.A.1.1.3) family. In terms of assembly, the complex is composed of two ATP-binding proteins (UgpC), two transmembrane proteins (UgpA and UgpE) and a solute-binding protein (UgpB).

The protein resides in the cell inner membrane. It carries out the reaction sn-glycerol 3-phosphate(out) + ATP + H2O = sn-glycerol 3-phosphate(in) + ADP + phosphate + H(+). Functionally, part of the ABC transporter complex UgpBAEC involved in sn-glycerol-3-phosphate (G3P) import. Responsible for energy coupling to the transport system. The protein is sn-glycerol-3-phosphate import ATP-binding protein UgpC of Jannaschia sp. (strain CCS1).